We begin with the raw amino-acid sequence, 160 residues long: MAIQPLRLDPITVLGKQLVIELFDCVDQRFDDIQWIEESMLEAARQANATIITSAFHKFSPIGISGVVVIAESHLAIHTWPEYGYAAVDVFTCGDVLDGAQAVRVLSERLGSRRHLISSMDRGLGGHRLGLLSRSLAGNGPVDEDSPTLRWALGQGTGVA.

Residue Ser-73 is the Schiff-base intermediate with substrate; via pyruvic acid of the active site. A Pyruvic acid (Ser); by autocatalysis modification is found at Ser-73. His-78 functions as the Proton acceptor; for processing activity in the catalytic mechanism. The active-site Proton donor; for catalytic activity is the Cys-93.

The protein belongs to the prokaryotic AdoMetDC family. Type 1 subfamily. In terms of assembly, heterotetramer of two alpha and two beta chains arranged as a dimer of alpha/beta heterodimers. The cofactor is pyruvate. Post-translationally, is synthesized initially as an inactive proenzyme. Formation of the active enzyme involves a self-maturation process in which the active site pyruvoyl group is generated from an internal serine residue via an autocatalytic post-translational modification. Two non-identical subunits are generated from the proenzyme in this reaction, and the pyruvate is formed at the N-terminus of the alpha chain, which is derived from the carboxyl end of the proenzyme. The post-translation cleavage follows an unusual pathway, termed non-hydrolytic serinolysis, in which the side chain hydroxyl group of the serine supplies its oxygen atom to form the C-terminus of the beta chain, while the remainder of the serine residue undergoes an oxidative deamination to produce ammonia and the pyruvoyl group blocking the N-terminus of the alpha chain.

It carries out the reaction S-adenosyl-L-methionine + H(+) = S-adenosyl 3-(methylsulfanyl)propylamine + CO2. It functions in the pathway amine and polyamine biosynthesis; S-adenosylmethioninamine biosynthesis; S-adenosylmethioninamine from S-adenosyl-L-methionine: step 1/1. Its function is as follows. Catalyzes the decarboxylation of S-adenosylmethionine to S-adenosylmethioninamine (dcAdoMet), the propylamine donor required for the synthesis of the polyamines spermine and spermidine from the diamine putrescine. This chain is S-adenosylmethionine decarboxylase proenzyme, found in Pseudomonas aeruginosa (strain LESB58).